The chain runs to 207 residues: Phosphatidylinositol phosphate synthase (207 aa).

Transmembrane regions (helical) follow at residues 21 to 44 and 50 to 67; these read LRAHVTPDVVTWIGTIGAVLMALI and WLWQGPWLVTLFIFSDSL. Position 28-31 (28-31) interacts with a CDP-1,2-diacyl-sn-glycerol; it reads DVVT. Mg(2+) is bound by residues Asp-65 and Asp-68. The a CDP-1,2-diacyl-sn-glycerol site is built by Gly-69, Arg-73, and Ser-79. The Mg(2+) site is built by Asp-86 and Asp-90. Transmembrane regions (helical) follow at residues 88–106, 112–131, 152–170, and 176–195; these read TLDRFGDAAIFTGVALYFA, VLWTAMACAALVFGMATSYV, RLLVSLVAIEITGLARVGA, and VVALPIALCYLTLAGAITVV. The active-site Proton acceptor is Asp-90.

It belongs to the CDP-alcohol phosphatidyltransferase class-I family. Homodimer. Requires Mg(2+) as cofactor.

The protein resides in the cell membrane. It catalyses the reaction a CDP-1,2-diacyl-sn-glycerol + 1D-myo-inositol 3-phosphate = a 1,2-diacyl-sn-glycero-3-phospho-(1D-myo-inositol-3-phosphate) + CMP + H(+). The catalysed reaction is 1,2-di-(9Z-octadecenoyl)-sn-glycero-3-cytidine-5'-diphosphate + 1D-myo-inositol 3-phosphate = 1,2-di-(9Z-octadecenoyl)-sn-glycero-3-phospho-(1D-myo-inositol-3-phosphate) + CMP + H(+). It functions in the pathway phospholipid metabolism; phosphatidylinositol phosphate biosynthesis. In terms of biological role, catalyzes the conjugation of the 1'-hydroxyl group of D-myo-inositol-3-phosphate (also named L-myo-inositol-1-phosphate) with a lipid tail of cytidine diphosphate diacylglycerol (CDP-DAG), forming phosphatidylinositol phosphate (PIP) and CMP. PIP is a precursor of phosphatidylinositol (PI) which is an essential lipid required for cell wall formation. The sequence is that of Phosphatidylinositol phosphate synthase from Cutibacterium acnes (strain DSM 16379 / KPA171202) (Propionibacterium acnes).